Consider the following 196-residue polypeptide: Endoribonuclease YbeY (196 aa).

The Zn(2+) site is built by histidine 120, histidine 124, and histidine 130.

This sequence belongs to the endoribonuclease YbeY family. It depends on Zn(2+) as a cofactor.

The protein localises to the cytoplasm. Functionally, single strand-specific metallo-endoribonuclease involved in late-stage 70S ribosome quality control and in maturation of the 3' terminus of the 16S rRNA. This chain is Endoribonuclease YbeY, found in Corynebacterium glutamicum (strain ATCC 13032 / DSM 20300 / JCM 1318 / BCRC 11384 / CCUG 27702 / LMG 3730 / NBRC 12168 / NCIMB 10025 / NRRL B-2784 / 534).